The primary structure comprises 520 residues: 4-hydroxyphenylacetate 3-monooxygenase oxygenase component (520 aa).

FAD-binding positions include 155 to 157 (HAI) and T196.

This sequence belongs to the FADH(2)-utilizing monooxygenase family. Homodimer. HPA 3-hydroxylase consists of a reductase component HpaC and an oxygenase component HpaB. Some form of interactions between the reductase and the oxygenase facilitate the transfer of FADH(-) to the oxygenase in P.aeruginosa, although interactions are not required in other species.

The catalysed reaction is 4-hydroxyphenylacetate + FADH2 + O2 = 3,4-dihydroxyphenylacetate + FAD + H2O + H(+). Its pathway is aromatic compound metabolism; 4-hydroxyphenylacetate degradation; pyruvate and succinate semialdehyde from 4-hydroxyphenylacetate: step 1/7. Functionally, oxygenase component of the 4-hydroxyphenylacetate (HPA) 3-hydroxylase. Catalyzes the hydroxylation of 4-hydroxyphenylacetate to form 3,4-dihydroxyphenylacetate, using FADH(-) provided by the reductase component HpaC to activate oxygen. To a lesser extent, can also use reduced FMN. In vitro, has hydroxylation activity toward tyrosol and various cinnamic acid derivatives, catalyzing the hydroxylation of p-coumaric acid, caffeic acid, ferulic acid, and coniferaldehyde. In Pseudomonas aeruginosa (strain ATCC 15692 / DSM 22644 / CIP 104116 / JCM 14847 / LMG 12228 / 1C / PRS 101 / PAO1), this protein is 4-hydroxyphenylacetate 3-monooxygenase oxygenase component.